The following is a 97-amino-acid chain: UPF0235 protein LHK_03181 (97 aa).

This sequence belongs to the UPF0235 family.

This chain is UPF0235 protein LHK_03181, found in Laribacter hongkongensis (strain HLHK9).